Consider the following 134-residue polypeptide: MLTWKLLGLLVLCLCAGGISGNGDPSPGSTDTHEEEDSPPLPLGPPIPGDPWPGAPPLFDEPPPPGSNRPWRDLPDSGAWPPKPPSTDPPKPPLPDDPWPAGTQPPENPWPPAPEMDHESQEEPDLDPPQEEYR.

A signal peptide spans 1–21; that stretch reads MLTWKLLGLLVLCLCAGGISG. Residues 18 to 134 form a disordered region; sequence GISGNGDPSP…DLDPPQEEYR (117 aa). Pro residues-rich tracts occupy residues 39–67 and 81–98; these read PPLPLGPPIPGDPWPGAPPLFDEPPPPGS and PPKPPSTDPPKPPLPDDP. The segment covering 122–134 has biased composition (acidic residues); it reads EEPDLDPPQEEYR.

It localises to the secreted. The sequence is that of Psoriasis susceptibility 1 candidate gene 2 protein homolog (Psors1c2) from Mus musculus (Mouse).